The following is a 202-amino-acid chain: LexA repressor (202 aa).

Catalysis depends on for autocatalytic cleavage activity residues serine 123 and lysine 159.

Belongs to the peptidase S24 family. In terms of assembly, homodimer.

The catalysed reaction is Hydrolysis of Ala-|-Gly bond in repressor LexA.. Functionally, binds the consensus sequence 5'-TGTTC-N(4)-GAACA-3'; some genes have a tandem consensus sequence, at high concentrations their binding is cooperative. Binds to the promoters of a number of genes, including dinB, imuA, lexA, recA, recQ, splB and uvrA. Represses a number of genes involved in the response to DNA damage (SOS response). In the presence of single-stranded DNA, RecA interacts with LexA causing an autocatalytic cleavage which disrupts the DNA-binding part of LexA, leading to derepression of the SOS regulon and eventually DNA repair. The sequence is that of LexA repressor from Verrucomicrobium spinosum (strain ATCC 43997 / DSM 4136 / JCM 18804 / IFAM 1439).